The sequence spans 279 residues: MATH domain and coiled-coil domain-containing protein At1g31390 (279 aa).

In terms of domain architecture, MATH spans 6-134 (EKKITWTIKN…NGDVKIVVEV (129 aa)). A coiled-coil region spans residues 235–271 (KLDWLEKKLKEVCEARVQEIDEEWKDLTDLKENWSSD).

This is MATH domain and coiled-coil domain-containing protein At1g31390 from Arabidopsis thaliana (Mouse-ear cress).